A 236-amino-acid polypeptide reads, in one-letter code: Demethylmenaquinone methyltransferase (236 aa).

Residues threonine 62, aspartate 80, 107-108, and serine 124 each bind S-adenosyl-L-methionine; that span reads DA.

Belongs to the class I-like SAM-binding methyltransferase superfamily. MenG/UbiE family.

The enzyme catalyses a 2-demethylmenaquinol + S-adenosyl-L-methionine = a menaquinol + S-adenosyl-L-homocysteine + H(+). The protein operates within quinol/quinone metabolism; menaquinone biosynthesis; menaquinol from 1,4-dihydroxy-2-naphthoate: step 2/2. In terms of biological role, methyltransferase required for the conversion of demethylmenaquinol (DMKH2) to menaquinol (MKH2). In Thermobifida fusca (strain YX), this protein is Demethylmenaquinone methyltransferase.